A 543-amino-acid chain; its full sequence is ATP-dependent ubiquitin transferase-like protein Cap2 (543 aa).

The segment at 1 to 159 (MSSAAAVADV…QNCIVAHANG (159 aa)) is E2-like domain. The For E2-like domain role is filled by Cys84. The segment at 160–305 (CPLWFITDNE…YLAQRNMPNS (146 aa)) is linker domain. The interval 306–543 (KTLAGKNIAV…RDRECPLCNS (238 aa)) is adenylation plus E1-like domain. Active-site for E1-like domain residues include Cys450 and Cys453.

The protein in the C-terminal section; belongs to the HesA/MoeB/ThiF family. In terms of assembly, forms a Cap2-CdnA complex. A Cap2 dimer is bound on either side by a CdnA monomer.

CD-NTase priming component of a CBASS antiviral system. CBASS (cyclic oligonucleotide-based antiphage signaling system) provides immunity against bacteriophages. The CD-NTase protein (CdnA) synthesizes cyclic nucleotides in response to infection; these serve as specific second messenger signals. The signals activate a diverse range of effectors, leading to bacterial cell death and thus abortive phage infection. A type II-A(GA) CBASS system. Functionally, acts as a protein transferase, conjugating CdnA, the CD-NTase, to unidentified target(s) in the cell probably via an E1-E2 ubiquitin transferase-like mechanism. This primes CdnA, upon phage infection CdnA activates and makes cyclic nucleotides. Protein conjugation requires ATP. In terms of biological role, the capV-cdnA-cap2-cap3 operon provides about 10(4)-fold protection in strain BWHPSA011 against infection by phage PaMx41. In P.aeruginosa strain PAO1 it confers protection against phages PaMx41 and JBD18 but not JBD67 (JBD18 and JBD67 do not replicate in BWHPSA011 / Pa011). When acb2 in JBD67 is deleted this CBASS operon then protects against JDB67 also. This CBASS system limits prophage induction of lysogenized JBD67 as well as viral lytic replication. This is ATP-dependent ubiquitin transferase-like protein Cap2 from Pseudomonas aeruginosa (strain BWHPSA011 / Pa011).